The following is a 126-amino-acid chain: Large ribosomal subunit protein bL17 (126 aa).

The protein belongs to the bacterial ribosomal protein bL17 family. As to quaternary structure, part of the 50S ribosomal subunit. Contacts protein L32.

The polypeptide is Large ribosomal subunit protein bL17 (Limosilactobacillus fermentum (strain NBRC 3956 / LMG 18251) (Lactobacillus fermentum)).